Reading from the N-terminus, the 354-residue chain is Uroporphyrinogen decarboxylase (354 aa).

Substrate is bound by residues 27 to 31 (RQAGR), Asp77, Tyr154, Thr209, and His327.

It belongs to the uroporphyrinogen decarboxylase family. In terms of assembly, homodimer.

It localises to the cytoplasm. The catalysed reaction is uroporphyrinogen III + 4 H(+) = coproporphyrinogen III + 4 CO2. The protein operates within porphyrin-containing compound metabolism; protoporphyrin-IX biosynthesis; coproporphyrinogen-III from 5-aminolevulinate: step 4/4. Catalyzes the decarboxylation of four acetate groups of uroporphyrinogen-III to yield coproporphyrinogen-III. The protein is Uroporphyrinogen decarboxylase of Escherichia coli (strain UTI89 / UPEC).